We begin with the raw amino-acid sequence, 730 residues long: Catalase R (730 aa).

H105 is a catalytic residue. Position 392 (Y392) interacts with heme. The segment at 403 to 433 is disordered; that stretch reads PNFEQIPVNRPRKPVHNNNRDGFGQQQIPTN.

This sequence belongs to the catalase family. Heme serves as cofactor.

The catalysed reaction is 2 H2O2 = O2 + 2 H2O. In terms of biological role, occurs in almost all aerobically respiring organisms and serves to protect cells from the toxic effects of hydrogen peroxide. This is Catalase R (catR) from Aspergillus niger.